The following is a 558-amino-acid chain: Arginine--tRNA ligase (558 aa).

The 'HIGH' region signature appears at 129–139; sequence ANPTGPLHVGH.

Belongs to the class-I aminoacyl-tRNA synthetase family. As to quaternary structure, monomer.

The protein localises to the cytoplasm. The catalysed reaction is tRNA(Arg) + L-arginine + ATP = L-arginyl-tRNA(Arg) + AMP + diphosphate. The chain is Arginine--tRNA ligase from Polaromonas naphthalenivorans (strain CJ2).